The sequence spans 26 residues: 83 kDa hypersensitivity protein (26 aa).

A disordered region spans residues 1-26 (FTPEDFISAPRRGEAIPDPKGELAVF). Over residues 11 to 26 (RRGEAIPDPKGELAVF) the composition is skewed to basic and acidic residues.

This Trichophyton tonsurans (Scalp ringworm fungus) protein is 83 kDa hypersensitivity protein.